Consider the following 347-residue polypeptide: F-box/kelch-repeat protein At5g03020 (347 aa).

A disordered region spans residues 1 to 21 (MTEEMSKESPPPPPTSFSSLP). The F-box domain maps to 14–62 (PTSFSSLPDDVALDCRARISRFHYPTLSLVSKGFRTLIASPELEATRSF). Kelch repeat units lie at residues 119–165 (QIYI…VIDG) and 167–215 (IYVI…KKKH).

This chain is F-box/kelch-repeat protein At5g03020, found in Arabidopsis thaliana (Mouse-ear cress).